The primary structure comprises 268 residues: Secreted RxLR effector protein 32 (268 aa).

The signal sequence occupies residues 1-21 (MRGAYYVAFALLVAASTRTAA). Positions 50 to 71 (RILRESPDPKDRLPVYASDEER) match the RxLR-dEER motif. Residues 120–257 (PKLEIKKSKR…PTPESLGIGG (138 aa)) are disordered. A compositionally biased stretch (low complexity) spans 148–161 (SNSKKSLVSSASAK). Positions 212–224 (NLDKNKRPDEAKI) are enriched in basic and acidic residues.

Belongs to the RxLR effector family.

It localises to the secreted. Its subcellular location is the host cell. Functionally, secreted effector that completely suppresses the host cell death induced by cell death-inducing proteins. The chain is Secreted RxLR effector protein 32 from Plasmopara viticola (Downy mildew of grapevine).